Consider the following 372-residue polypeptide: Peptide chain release factor 2 (372 aa).

Gln-253 carries the N5-methylglutamine modification.

It belongs to the prokaryotic/mitochondrial release factor family. Methylated by PrmC. Methylation increases the termination efficiency of RF2.

The protein resides in the cytoplasm. Peptide chain release factor 2 directs the termination of translation in response to the peptide chain termination codons UGA and UAA. This Nocardia farcinica (strain IFM 10152) protein is Peptide chain release factor 2.